A 432-amino-acid polypeptide reads, in one-letter code: Glutamate-1-semialdehyde 2,1-aminomutase 1 (432 aa).

Residue lysine 268 is modified to N6-(pyridoxal phosphate)lysine.

This sequence belongs to the class-III pyridoxal-phosphate-dependent aminotransferase family. HemL subfamily. As to quaternary structure, homodimer. It depends on pyridoxal 5'-phosphate as a cofactor.

The protein resides in the cytoplasm. It carries out the reaction (S)-4-amino-5-oxopentanoate = 5-aminolevulinate. The protein operates within porphyrin-containing compound metabolism; protoporphyrin-IX biosynthesis; 5-aminolevulinate from L-glutamyl-tRNA(Glu): step 2/2. This is Glutamate-1-semialdehyde 2,1-aminomutase 1 from Bacillus cereus (strain ZK / E33L).